A 474-amino-acid polypeptide reads, in one-letter code: Tubulin gamma-1 chain (474 aa).

142 to 148 (AGGTGSG) contacts GTP.

Belongs to the tubulin family. Gamma-tubulin complex is composed of gamma-tubulin and GCP proteins.

It is found in the cytoplasm. The protein resides in the cytoskeleton. The protein localises to the microtubule organizing center. It localises to the nucleus. Its subcellular location is the cell cortex. Functionally, tubulin is the major constituent of microtubules. The gamma chain is found at microtubule organizing centers (MTOC) such as the spindle poles, suggesting that it is involved in the minus-end nucleation of microtubule assembly. In terms of biological role, gamma-tubulin complex is essential for the control of microtubular network remodeling in the course of initiation and development of giant-feeding cells, and for the successful reproduction of nematodes (e.g. Meloidogyne spp.) in their plant hosts. This chain is Tubulin gamma-1 chain (TUBG1), found in Arabidopsis thaliana (Mouse-ear cress).